An 86-amino-acid polypeptide reads, in one-letter code: Large ribosomal subunit protein bL31B (86 aa).

This sequence belongs to the bacterial ribosomal protein bL31 family. Type B subfamily. As to quaternary structure, part of the 50S ribosomal subunit.

This Yersinia pseudotuberculosis serotype O:1b (strain IP 31758) protein is Large ribosomal subunit protein bL31B.